Consider the following 704-residue polypeptide: Elongation factor G (704 aa).

Positions 8 to 291 constitute a tr-type G domain; it reads DKVRNIGIMA…AVVEYLASPV (284 aa). GTP-binding positions include 17 to 24, 90 to 94, and 144 to 147; these read AHIDAGKT, DTPGH, and NKMD.

It belongs to the TRAFAC class translation factor GTPase superfamily. Classic translation factor GTPase family. EF-G/EF-2 subfamily.

The protein resides in the cytoplasm. In terms of biological role, catalyzes the GTP-dependent ribosomal translocation step during translation elongation. During this step, the ribosome changes from the pre-translocational (PRE) to the post-translocational (POST) state as the newly formed A-site-bound peptidyl-tRNA and P-site-bound deacylated tRNA move to the P and E sites, respectively. Catalyzes the coordinated movement of the two tRNA molecules, the mRNA and conformational changes in the ribosome. This is Elongation factor G from Chlorobium phaeobacteroides (strain DSM 266 / SMG 266 / 2430).